A 220-amino-acid polypeptide reads, in one-letter code: Phosphatidylinositol phosphate synthase (220 aa).

Helical transmembrane passes span 21 to 46 and 52 to 72; these read LLRA…ALTL and LFWG…DGAM. Residue 29–32 participates in a CDP-1,2-diacyl-sn-glycerol binding; that stretch reads DTVT. D66 and D69 together coordinate Mg(2+). Residues G70, R74, and T80 each coordinate a CDP-1,2-diacyl-sn-glycerol. The Mg(2+) site is built by D87 and D91. Catalysis depends on D91, which acts as the Proton acceptor. 4 helical membrane passes run 93–110, 116–134, 154–171, and 177–194; these read VADG…AFGW, VVAT…YVKA, LIIV…GVQW, and MWVL…RMHA.

Belongs to the CDP-alcohol phosphatidyltransferase class-I family. In terms of assembly, homodimer. Requires Mg(2+) as cofactor.

The protein resides in the cell membrane. It carries out the reaction a CDP-1,2-diacyl-sn-glycerol + 1D-myo-inositol 3-phosphate = a 1,2-diacyl-sn-glycero-3-phospho-(1D-myo-inositol-3-phosphate) + CMP + H(+). It catalyses the reaction 1,2-di-(9Z-octadecenoyl)-sn-glycero-3-cytidine-5'-diphosphate + 1D-myo-inositol 3-phosphate = 1,2-di-(9Z-octadecenoyl)-sn-glycero-3-phospho-(1D-myo-inositol-3-phosphate) + CMP + H(+). It participates in phospholipid metabolism; phosphatidylinositol phosphate biosynthesis. In terms of biological role, catalyzes the conjugation of the 1'-hydroxyl group of D-myo-inositol-3-phosphate (also named L-myo-inositol-1-phosphate) with a lipid tail of cytidine diphosphate diacylglycerol (CDP-DAG), forming phosphatidylinositol phosphate (PIP) and CMP. PIP is a precursor of phosphatidylinositol (PI) which is an essential lipid for mycobacteria required for formation of their cell wall. This Mycobacteroides abscessus (strain ATCC 19977 / DSM 44196 / CCUG 20993 / CIP 104536 / JCM 13569 / NCTC 13031 / TMC 1543 / L948) (Mycobacterium abscessus) protein is Phosphatidylinositol phosphate synthase.